The sequence spans 857 residues: Median body protein (857 aa).

Coiled coils occupy residues 169–546 and 571–793; these read HNAL…MRTE and LAHL…TKAM.

The protein localises to the cytoplasm. It is found in the cytoskeleton. In terms of biological role, structural component of the ventral disk involved in maintanance of a domed conformation of the disk required for proper attachment. May have a role in immobilizing the microtubules between cell divisions. The protein is Median body protein of Giardia intestinalis (strain ATCC 50803 / WB clone C6) (Giardia lamblia).